We begin with the raw amino-acid sequence, 419 residues long: L-rhamnose isomerase (419 aa).

3 residues coordinate Mn(2+): His-262, Asp-294, and Asp-296.

Belongs to the rhamnose isomerase family. As to quaternary structure, homotetramer. Requires Mn(2+) as cofactor.

The protein resides in the cytoplasm. The catalysed reaction is L-rhamnopyranose = L-rhamnulose. Its pathway is carbohydrate degradation; L-rhamnose degradation; glycerone phosphate from L-rhamnose: step 1/3. Its function is as follows. Catalyzes the interconversion of L-rhamnose and L-rhamnulose. The polypeptide is L-rhamnose isomerase (Escherichia coli (strain K12 / MC4100 / BW2952)).